A 451-amino-acid polypeptide reads, in one-letter code: UDP-glycosyltransferase 76C4 (451 aa).

UDP-alpha-D-glucose is bound by residues serine 273, 332–334 (APQ), 349–357 (HNGWNSTVE), and 371–374 (RWDQ).

It belongs to the UDP-glycosyltransferase family.

The sequence is that of UDP-glycosyltransferase 76C4 (UGT76C4) from Arabidopsis thaliana (Mouse-ear cress).